The primary structure comprises 77 residues: U14-theraphotoxin-Cg1b (77 aa).

The N-terminal stretch at 1–21 is a signal peptide; it reads MKTSVLLVILGIAAITVQCTA. Positions 22-49 are excised as a propeptide; that stretch reads SESVEQDSLRTFVDAVLGWNAEMASEAR. 3 disulfide bridges follow: Cys50/Cys64, Cys57/Cys69, and Cys63/Cys75.

The protein belongs to the neurotoxin 10 (Hwtx-1) family. 65 (Jztx-21) subfamily. Expressed by the venom gland.

Its subcellular location is the secreted. Functionally, probable ion channel inhibitor. The chain is U14-theraphotoxin-Cg1b from Chilobrachys guangxiensis (Chinese earth tiger tarantula).